The chain runs to 235 residues: uncharacterized protein (235 aa).

Disordered regions lie at residues 60–96 (SSNR…QKKT) and 192–235 (LNTS…YDSF). Residues 80–93 (SFQNMNSSMPSSTQ) are compositionally biased toward polar residues. Positions 197–214 (SEDDTESIVETDYSEEEK) are enriched in acidic residues.

Belongs to the asfivirus DP238L family.

This is an uncharacterized protein from Ornithodoros (relapsing fever ticks).